The sequence spans 270 residues: Regulatory protein RecX (270 aa).

Belongs to the RecX family.

The protein resides in the cytoplasm. Its function is as follows. Modulates RecA activity. This is Regulatory protein RecX from Bacillus mycoides (strain KBAB4) (Bacillus weihenstephanensis).